We begin with the raw amino-acid sequence, 306 residues long: 4-diphosphocytidyl-2-C-methyl-D-erythritol kinase (306 aa).

The active site involves K11. 98 to 108 contacts ATP; the sequence is PIAGGMGGGSA. D140 is a catalytic residue.

This sequence belongs to the GHMP kinase family. IspE subfamily.

It catalyses the reaction 4-CDP-2-C-methyl-D-erythritol + ATP = 4-CDP-2-C-methyl-D-erythritol 2-phosphate + ADP + H(+). The protein operates within isoprenoid biosynthesis; isopentenyl diphosphate biosynthesis via DXP pathway; isopentenyl diphosphate from 1-deoxy-D-xylulose 5-phosphate: step 3/6. Catalyzes the phosphorylation of the position 2 hydroxy group of 4-diphosphocytidyl-2C-methyl-D-erythritol. In Leifsonia xyli subsp. xyli (strain CTCB07), this protein is 4-diphosphocytidyl-2-C-methyl-D-erythritol kinase.